Consider the following 235-residue polypeptide: Ribonuclease PH (235 aa).

Phosphate contacts are provided by residues Arg86 and 124–126; that span reads GTR.

The protein belongs to the RNase PH family. As to quaternary structure, homohexameric ring arranged as a trimer of dimers.

It catalyses the reaction tRNA(n+1) + phosphate = tRNA(n) + a ribonucleoside 5'-diphosphate. Its function is as follows. Phosphorolytic 3'-5' exoribonuclease that plays an important role in tRNA 3'-end maturation. Removes nucleotide residues following the 3'-CCA terminus of tRNAs; can also add nucleotides to the ends of RNA molecules by using nucleoside diphosphates as substrates, but this may not be physiologically important. Probably plays a role in initiation of 16S rRNA degradation (leading to ribosome degradation) during starvation. The sequence is that of Ribonuclease PH from Francisella philomiragia subsp. philomiragia (strain ATCC 25017 / CCUG 19701 / FSC 153 / O#319-036).